We begin with the raw amino-acid sequence, 1087 residues long: Collagen alpha-2(I) chain (1087 aa).

The disordered stretch occupies residues 1–931; that stretch reads APDPGPGPMG…PGPAGGGYDV (931 aa). Composition is skewed to low complexity over residues 83 to 120, 150 to 159, and 166 to 187; these read EPGA…AAGP, EPGPNGAVGP, and PGNN…AGAP. Over residues 189-199 the composition is skewed to pro residues; the sequence is FPGPRGGPGPQ. Positions 201 to 211 are enriched in low complexity; sequence PQGAAGQRGLA. Gly residues predominate over residues 218-227; it reads GVKGDGGPKG. Low complexity-rich tracts occupy residues 228 to 241, 278 to 321, 335 to 345, 360 to 384, and 396 to 408; these read EPGN…PGPQ, AAGP…AGPS, PRGQPGNLGFP, KGAT…TGAT, and QGAA…QGLP. Residues 409 to 418 are compositionally biased toward gly residues; it reads GPAGGAGEAG. A compositionally biased stretch (low complexity) spans 443-453; that stretch reads NPGAAGASGPQ. Gly residues predominate over residues 466-493; sequence GTDGGKGEPGAAGAAGGPGHQGPGGMPG. Positions 504–515 are enriched in basic and acidic residues; sequence KGEKGEAGHRGP. Low complexity-rich tracts occupy residues 560 to 602, 613 to 640, and 677 to 695; these read PAGA…TGAR, FPGA…PAGK, and PGPA…LGLQ. Residues 708 to 717 are compositionally biased toward gly residues; it reads GSPGGAGAVG. 2 stretches are compositionally biased toward low complexity: residues 718 to 740 and 776 to 788; these read EPGR…LGLP and PGSS…AGAP. The span at 792-812 shows a compositional bias: gly residues; the sequence is GPSGGAGRGNRGESGPGGAAG. Over residues 813–828 the composition is skewed to low complexity; that stretch reads AVGPAGARGAAGPSGP. The span at 829 to 843 shows a compositional bias: basic and acidic residues; sequence RGEKGVAGEKGERGL. Low complexity-rich tracts occupy residues 849–868 and 897–909; these read LQGM…AGPN and APGA…YVGP. The segment covering 910–924 has biased composition (pro residues); it reads AGPPGSPGLPGPPGP. The Fibrillar collagen NC1 domain maps to 929–1087; it reads YDVSGYDEYR…GLDLGPVCFK (159 aa).

It belongs to the fibrillar collagen family.

It localises to the secreted. The protein resides in the extracellular space. It is found in the extracellular matrix. The polypeptide is Collagen alpha-2(I) chain (Epinephelus costae (Goldblotch grouper)).